A 513-amino-acid polypeptide reads, in one-letter code: Ribonuclease Y (513 aa).

Residues 3 to 23 traverse the membrane as a helical segment; sequence IGTLLLFTFLGLVAGATAVWL. Residues 77–96 are disordered; the sequence is LQSVESKLKSREQTLNQRQE. Positions 82-96 are enriched in basic and acidic residues; that stretch reads SKLKSREQTLNQRQE. One can recognise a KH domain in the interval 203–263; that stretch reads SVTVFHIESD…VRREIARLAL (61 aa). The HD domain maps to 329–422; sequence LLQHSRETAN…VQVCDAISGA (94 aa).

This sequence belongs to the RNase Y family.

Its subcellular location is the cell membrane. Functionally, endoribonuclease that initiates mRNA decay. The polypeptide is Ribonuclease Y (Porphyromonas gingivalis (strain ATCC BAA-308 / W83)).